Consider the following 334-residue polypeptide: Phospho-N-acetylmuramoyl-pentapeptide-transferase (334 aa).

The next 10 membrane-spanning stretches (helical) occupy residues 11–31 (GAGLTALAGALALGPVVIPLM), 55–75 (PTMGGVIFIIPAILATLIFAP), 84–104 (LIIALVLTVGHGLVGFADDYI), 124–144 (VGLAAVLGYGAVEVLGLGTAV), 158–178 (PLYYLLVLIMVWGTASAVNFA), 184–204 (LLGGLSVITFSFYGLVVALAL), 205–225 (GQTDMAVLGTALVGGVLGFLH), 233–253 (IFMGDVGSFALGGALAALAVL), 258–278 (FLLVIVGAVYVIEVISVILQV), and 311–331 (LFWGAGLLFTLLGWLVLPGML).

This sequence belongs to the glycosyltransferase 4 family. MraY subfamily. Mg(2+) is required as a cofactor.

It is found in the cell membrane. It catalyses the reaction UDP-N-acetyl-alpha-D-muramoyl-L-alanyl-gamma-D-glutamyl-meso-2,6-diaminopimeloyl-D-alanyl-D-alanine + di-trans,octa-cis-undecaprenyl phosphate = di-trans,octa-cis-undecaprenyl diphospho-N-acetyl-alpha-D-muramoyl-L-alanyl-D-glutamyl-meso-2,6-diaminopimeloyl-D-alanyl-D-alanine + UMP. It participates in cell wall biogenesis; peptidoglycan biosynthesis. In terms of biological role, catalyzes the initial step of the lipid cycle reactions in the biosynthesis of the cell wall peptidoglycan: transfers peptidoglycan precursor phospho-MurNAc-pentapeptide from UDP-MurNAc-pentapeptide onto the lipid carrier undecaprenyl phosphate, yielding undecaprenyl-pyrophosphoryl-MurNAc-pentapeptide, known as lipid I. The polypeptide is Phospho-N-acetylmuramoyl-pentapeptide-transferase (Symbiobacterium thermophilum (strain DSM 24528 / JCM 14929 / IAM 14863 / T)).